Reading from the N-terminus, the 627-residue chain is DNA mismatch repair protein MutL (627 aa).

A disordered region spans residues 363–397; that stretch reads FAEPAAREPVAPRYSPAPASGSRPAAPWPNAQPGY. Residues 364–387 show a composition bias toward low complexity; sequence AEPAAREPVAPRYSPAPASGSRPA.

Belongs to the DNA mismatch repair MutL/HexB family.

In terms of biological role, this protein is involved in the repair of mismatches in DNA. It is required for dam-dependent methyl-directed DNA mismatch repair. May act as a 'molecular matchmaker', a protein that promotes the formation of a stable complex between two or more DNA-binding proteins in an ATP-dependent manner without itself being part of a final effector complex. This chain is DNA mismatch repair protein MutL, found in Shigella flexneri serotype 5b (strain 8401).